A 167-amino-acid polypeptide reads, in one-letter code: Keratin-associated protein 1-3 (167 aa).

The protein belongs to the KRTAP type 1 family. Interacts with hair keratins. Expressed in the middle/upper portions of the hair cortex, in the region termed the keratogenous zone.

In terms of biological role, in the hair cortex, hair keratin intermediate filaments are embedded in an interfilamentous matrix, consisting of hair keratin-associated proteins (KRTAP), which are essential for the formation of a rigid and resistant hair shaft through their extensive disulfide bond cross-linking with abundant cysteine residues of hair keratins. The matrix proteins include the high-sulfur and high-glycine-tyrosine keratins. In Homo sapiens (Human), this protein is Keratin-associated protein 1-3 (KRTAP1-3).